The following is a 463-amino-acid chain: Type I restriction enzyme StySPI specificity subunit (463 aa).

Belongs to the type-I restriction system S methylase family. As to quaternary structure, the type I restriction/modification system is composed of three polypeptides R, M and S; the restriction enzyme has stoichiometry R(2)M(2)S(1) while the methyltransferase is M(2)S(1).

The specificity (S) subunit of a type I restriction enzyme; this subunit dictates DNA sequence specificity. The M and S subunits together form a methyltransferase (MTase) that methylates A-2 on the top strand and A-3 on the bottom strand of the sequence 5'-AACN(6)GTRC-3'. In the presence of the R subunit the complex can also act as an endonuclease, binding to the same target sequence but cutting the DNA some distance from this site. Whether the DNA is cut or modified depends on the methylation state of the target sequence. When the target site is unmodified, the DNA is cut. When the target site is hemimethylated, the complex acts as a maintenance MTase modifying the DNA so that both strands become methylated. After locating a non-methylated recognition site, the enzyme complex serves as a molecular motor that translocates DNA in an ATP-dependent manner until a collision occurs that triggers cleavage. The protein is Type I restriction enzyme StySPI specificity subunit of Salmonella potsdam.